The sequence spans 204 residues: Transcription initiation factor TFIID subunit 11b (204 aa).

The tract at residues 38-60 (PFEAAMEEQEESPVETEQTLEGD) is disordered. Residues 42–58 (AMEEQEESPVETEQTLE) show a composition bias toward acidic residues. In terms of domain architecture, Histone-fold spans 106-195 (FTEEQMSRYE…RRLKLQGKVP (90 aa)).

The protein belongs to the TAF11 family. Component of the TFIID complex. TFIID is composed of TATA binding protein (TBP) and a number of TBP-associated factors (TAFs) whose MWs range from 14-217 kDa. As to expression, expressed in roots, leaves and inflorescences.

It is found in the nucleus. Functionally, TAFs are components of the transcription factor IID (TFIID) complex that is essential for mediating regulation of RNA polymerase transcription. This chain is Transcription initiation factor TFIID subunit 11b (TAF11B), found in Arabidopsis thaliana (Mouse-ear cress).